Here is a 313-residue protein sequence, read N- to C-terminus: Olfactory receptor 1J2 (313 aa).

At 1-25 (MSPENQSSVSEFLLLGLPIRPEQQA) the chain is on the extracellular side. N-linked (GlcNAc...) asparagine glycosylation occurs at asparagine 5. The chain crosses the membrane as a helical span at residues 26–49 (VFFTLFLGMYLTTVLGNLLIMLLI). Over 50–57 (QLDSHLHT) the chain is Cytoplasmic. A helical membrane pass occupies residues 58–79 (PMYFFLSHLALTDISFSSVTVP). Residues 80 to 100 (KMLMDMRTKYKSILYEECISQ) lie on the Extracellular side of the membrane. Cysteine 97 and cysteine 189 are oxidised to a cystine. A helical membrane pass occupies residues 101 to 120 (MYFFIFFTDLDSFLITSMAY). The Cytoplasmic segment spans residues 121–139 (DRYVAICHPLHYTVIMREE). The helical transmembrane segment at 140–158 (LCVFLVAVSWILSCASSLS) threads the bilayer. Residues 159 to 196 (HTLLLTRLSFCAANTIPHVFCDLAALLKLSCSDIFLNE) are Extracellular-facing. Residues 197 to 219 (LVMFTVGVVVITLPFMCILVSYG) form a helical membrane-spanning segment. The Cytoplasmic segment spans residues 220–236 (YIGATILRVPSTKGIHK). Residues 237-259 (ALSTCGSHLSVVSLYYGSIFGQY) traverse the membrane as a helical segment. Topologically, residues 260–272 (LFPTVSSSIDKDV) are extracellular. A helical transmembrane segment spans residues 273–292 (IVALMYTVVTPMLNPFIYSL). The Cytoplasmic segment spans residues 293-313 (RNRDMKEALGKLFSRATFFSW).

This sequence belongs to the G-protein coupled receptor 1 family.

It localises to the cell membrane. Functionally, odorant receptor. This chain is Olfactory receptor 1J2 (OR1J2), found in Homo sapiens (Human).